The primary structure comprises 402 residues: Multidrug resistance protein MdtH (402 aa).

11 helical membrane-spanning segments follow: residues 13–33 (YFLLVDNMLVVLGFFVVFPLI), 34–54 (SIRFVDQMGWAALMVGIALGL), 99–116 (PWVLWLSCILSGLGGTLF), 139–159 (LLMMQDSAGAVIGALLGSWLL), 165–185 (LVCSAGAALFIACAAFNAWYL), 214–234 (VLTLTGYYMLAVQVMLMLPIM), 243–263 (AAVKWMYAIEATISLTLLYPI), 277–297 (LMAGLLVMTLAMLPIGMTSSL), 300–320 (LFTLICLFYIGSIIAEPARET), 340–360 (LGLAFGGALGYAGGGWLFDAG), and 368–388 (LPWLMLGAIGFITFLALWWQF).

Belongs to the major facilitator superfamily. DHA1 family. MdtH (TC 2.A.1.2.21) subfamily.

Its subcellular location is the cell inner membrane. This chain is Multidrug resistance protein MdtH, found in Klebsiella pneumoniae (strain 342).